The following is a 93-amino-acid chain: Small ribosomal subunit protein bS20 (93 aa).

Over residues 1-18 the composition is skewed to basic and acidic residues; it reads MPLHKSAEKRLRQSEKRN. A disordered region spans residues 1 to 25; that stretch reads MPLHKSAEKRLRQSEKRNARNRARK.

Belongs to the bacterial ribosomal protein bS20 family.

Binds directly to 16S ribosomal RNA. In Chlorobium chlorochromatii (strain CaD3), this protein is Small ribosomal subunit protein bS20.